A 406-amino-acid polypeptide reads, in one-letter code: MSVEQAPVQRADFDQVMVPNYSPAAFIPVRGEGSRVWDQSGRELIDFAGGIAVNALGHCHPALVKALTEQANTLWHVSNVFTNEPALRLAHKLVDATFADRAFFCNSGAESNEAAFKLARRVAHDRFGPQKHEIIATVNSFHGRTLFTVSVGGQPKYSDGFGPKITGISHVPYNDLEALKAQISDKTCAVVIEPIQGESGVVPADKAYLEGARKLCDEHNALLIFDEVQTGVGRTGSLYAYQHYGVIPDILTSAKSLGGGFPIGAMLTTTELAKHLAVGTHGTTYGGNPLGCAVACAVLDVVNTPETLAGIKAKHERFKTRLEQIGQQYNLFSQVRGVGLLLGCVLTEAWKGKAKDVLNAAEKEGVMVLQAGPDVVRFAPSLVVEDADIDEGLDRFERAVATLTKG.

Pyridoxal 5'-phosphate-binding positions include 108–109 (GA) and Phe141. Arg144 contributes to the N(2)-acetyl-L-ornithine binding site. 226–229 (DEVQ) lines the pyridoxal 5'-phosphate pocket. Lys255 is modified (N6-(pyridoxal phosphate)lysine). Residue Thr283 participates in N(2)-acetyl-L-ornithine binding. Thr284 lines the pyridoxal 5'-phosphate pocket.

It belongs to the class-III pyridoxal-phosphate-dependent aminotransferase family. ArgD subfamily. In terms of assembly, homodimer. Pyridoxal 5'-phosphate is required as a cofactor.

It is found in the cytoplasm. It carries out the reaction N(2)-acetyl-L-ornithine + 2-oxoglutarate = N-acetyl-L-glutamate 5-semialdehyde + L-glutamate. The protein operates within amino-acid biosynthesis; L-arginine biosynthesis; N(2)-acetyl-L-ornithine from L-glutamate: step 4/4. The sequence is that of Acetylornithine aminotransferase from Pseudomonas putida (strain ATCC 47054 / DSM 6125 / CFBP 8728 / NCIMB 11950 / KT2440).